A 280-amino-acid polypeptide reads, in one-letter code: MVSSYFTFPQIDPIIFSIGPLSLRWYGLMYLVGFAAAFWLAGVRLSRTNWTKEQLSDLLFWGFLGVILGGRIGYVLFYQFELFLSDPLYLFKIWTGGMSFHGGLLGVIAALWWFSRKAKCTFLQVGDFIAPLVPIGLGAGRIGNFINAELWGRTTDVSWGVIFPGAGPLPRHPSQLYEFALEGVVLFLILWLYSRKPRPIGAVSGLFLLGYGSFRFFVEFFREPDQHIGLYEGAFSLGISQGQILSAPMIIGGIALMVWAVRRNKMAETGVPKSSKAAKA.

Transmembrane regions (helical) follow at residues 23 to 43 (LRWY…LAGV), 58 to 78 (LLFW…VLFY), 93 to 113 (IWTG…ALWW), and 120 to 140 (CTFL…LGAG). Residue Arg-141 coordinates a 1,2-diacyl-sn-glycero-3-phospho-(1'-sn-glycerol). Helical transmembrane passes span 173 to 193 (PSQL…LWLY), 200 to 220 (IGAV…FVEF), and 241 to 261 (QGQI…VWAV).

Belongs to the Lgt family.

The protein resides in the cell inner membrane. The enzyme catalyses L-cysteinyl-[prolipoprotein] + a 1,2-diacyl-sn-glycero-3-phospho-(1'-sn-glycerol) = an S-1,2-diacyl-sn-glyceryl-L-cysteinyl-[prolipoprotein] + sn-glycerol 1-phosphate + H(+). It functions in the pathway protein modification; lipoprotein biosynthesis (diacylglyceryl transfer). In terms of biological role, catalyzes the transfer of the diacylglyceryl group from phosphatidylglycerol to the sulfhydryl group of the N-terminal cysteine of a prolipoprotein, the first step in the formation of mature lipoproteins. The sequence is that of Phosphatidylglycerol--prolipoprotein diacylglyceryl transferase from Pseudoalteromonas atlantica (strain T6c / ATCC BAA-1087).